A 277-amino-acid polypeptide reads, in one-letter code: Undecaprenyl-diphosphatase (277 aa).

8 helical membrane passes run 11–31 (WWQA…PISS), 47–67 (AGAS…LIYF), 96–116 (VGIL…KAIW), 123–143 (LWVI…AEQT), 153–173 (LGIW…IPGV), 197–217 (SFLL…ISEF), 227–247 (LGTL…IQFL), and 254–274 (LFIV…ALGF).

It belongs to the UppP family.

The protein resides in the cell inner membrane. It carries out the reaction di-trans,octa-cis-undecaprenyl diphosphate + H2O = di-trans,octa-cis-undecaprenyl phosphate + phosphate + H(+). Its function is as follows. Catalyzes the dephosphorylation of undecaprenyl diphosphate (UPP). Confers resistance to bacitracin. This is Undecaprenyl-diphosphatase from Synechococcus sp. (strain JA-2-3B'a(2-13)) (Cyanobacteria bacterium Yellowstone B-Prime).